The sequence spans 545 residues: ATP synthase subunit alpha (545 aa).

172–179 (GDRKTGKT) lines the ATP pocket.

It belongs to the ATPase alpha/beta chains family. In terms of assembly, F-type ATPases have 2 components, CF(1) - the catalytic core - and CF(0) - the membrane proton channel. CF(1) has five subunits: alpha(3), beta(3), gamma(1), delta(1), epsilon(1). CF(0) has three main subunits: a(1), b(2) and c(9-12). The alpha and beta chains form an alternating ring which encloses part of the gamma chain. CF(1) is attached to CF(0) by a central stalk formed by the gamma and epsilon chains, while a peripheral stalk is formed by the delta and b chains.

The protein resides in the cell membrane. The catalysed reaction is ATP + H2O + 4 H(+)(in) = ADP + phosphate + 5 H(+)(out). Functionally, produces ATP from ADP in the presence of a proton gradient across the membrane. The alpha chain is a regulatory subunit. In Nocardia farcinica (strain IFM 10152), this protein is ATP synthase subunit alpha.